Here is a 316-residue protein sequence, read N- to C-terminus: MSQKEQTLMTPYLQFNRHQWAALRDSVPMTLTEDEITRLKGINEDLSLEEVAEIYLPLSRLLNFYISSNLRRQAVLEQFLGTNGQRIPYIISIAGSVAVGKSTTARVLQALLSRWPEHRHVELITTDGFLHPNSVLKERGLMKKKGFPQSYDMHRLVKFVSDLKSGVPQATAPVYSHLIYDVIPDGDKTVAQPDILILEGLNVLQSGMDYPHDPHHVFVSDFVDFSIYVDAPEELLKSWYINRFLKFREGAFTDPDSYFHNYAKLSKEEAVDIATSLWNEINLMNLKENILPTRERASLIMTKSANHSVNQVRLRK.

Position 95–102 (95–102 (GSVAVGKS)) interacts with ATP.

It belongs to the prokaryotic pantothenate kinase family.

It localises to the cytoplasm. It carries out the reaction (R)-pantothenate + ATP = (R)-4'-phosphopantothenate + ADP + H(+). Its pathway is cofactor biosynthesis; coenzyme A biosynthesis; CoA from (R)-pantothenate: step 1/5. This is Pantothenate kinase from Klebsiella pneumoniae (strain 342).